A 366-amino-acid chain; its full sequence is Chorismate synthase (366 aa).

Residues arginine 48 and arginine 54 each coordinate NADP(+). FMN-binding positions include 125–127, 238–239, glycine 278, 293–297, and arginine 319; these read RSS, NA, and KPTSS.

Belongs to the chorismate synthase family. As to quaternary structure, homotetramer. FMNH2 serves as cofactor.

The enzyme catalyses 5-O-(1-carboxyvinyl)-3-phosphoshikimate = chorismate + phosphate. It participates in metabolic intermediate biosynthesis; chorismate biosynthesis; chorismate from D-erythrose 4-phosphate and phosphoenolpyruvate: step 7/7. Catalyzes the anti-1,4-elimination of the C-3 phosphate and the C-6 proR hydrogen from 5-enolpyruvylshikimate-3-phosphate (EPSP) to yield chorismate, which is the branch point compound that serves as the starting substrate for the three terminal pathways of aromatic amino acid biosynthesis. This reaction introduces a second double bond into the aromatic ring system. In Burkholderia multivorans (strain ATCC 17616 / 249), this protein is Chorismate synthase.